Reading from the N-terminus, the 154-residue chain is UPF0178 protein YaiI (154 aa).

This sequence belongs to the UPF0178 family.

In Escherichia coli (strain ATCC 8739 / DSM 1576 / NBRC 3972 / NCIMB 8545 / WDCM 00012 / Crooks), this protein is UPF0178 protein YaiI.